The chain runs to 352 residues: S-adenosylmethionine:tRNA ribosyltransferase-isomerase (352 aa).

It belongs to the QueA family. As to quaternary structure, monomer.

It localises to the cytoplasm. It catalyses the reaction 7-aminomethyl-7-carbaguanosine(34) in tRNA + S-adenosyl-L-methionine = epoxyqueuosine(34) in tRNA + adenine + L-methionine + 2 H(+). It functions in the pathway tRNA modification; tRNA-queuosine biosynthesis. Transfers and isomerizes the ribose moiety from AdoMet to the 7-aminomethyl group of 7-deazaguanine (preQ1-tRNA) to give epoxyqueuosine (oQ-tRNA). This Allorhizobium ampelinum (strain ATCC BAA-846 / DSM 112012 / S4) (Agrobacterium vitis (strain S4)) protein is S-adenosylmethionine:tRNA ribosyltransferase-isomerase.